The sequence spans 725 residues: Another transcription unit protein (725 aa).

Residues 1–10 show a composition bias toward acidic residues; sequence MGSQNSDDDS. Disordered regions lie at residues 1-379, 566-603, and 617-725; these read MGSQ…PETR, RQAM…EGSD, and YKKG…SDND. Low complexity predominate over residues 11-70; the sequence is GSSGSSRSGSRSVTPQGGSAPGSQRSRRSGSGSDRSRSGSRSSRSRSGSGSPRSARSGSA. Over residues 82–101 the composition is skewed to basic residues; that stretch reads RSKRSRSAHSRRSGSARSRK. The span at 104–116 shows a compositional bias: polar residues; that stretch reads TPESPQSHRSGSL. The span at 117 to 140 shows a compositional bias: low complexity; that stretch reads QSRKSGSPQSRRSGSPQSRKSGST. Basic residues predominate over residues 141–160; that stretch reads HSRRSGSAHSRRSGSARSRK. Residues Ser-175, Ser-186, Ser-188, and Ser-190 each carry the phosphoserine modification. Basic residues predominate over residues 206–223; the sequence is SRSRSRSRSGSRTSRSRS. A compositionally biased stretch (low complexity) spans 224–242; the sequence is KTGTPSPNRSRSGSASGSG. Phosphoserine occurs at positions 265, 267, and 269. At Thr-286 the chain carries Phosphothreonine. Residues Ser-288, Ser-290, and Ser-312 each carry the phosphoserine modification. Residues 306-318 are compositionally biased toward acidic residues; the sequence is GDADDISDDEDEA. Over residues 325–353 the composition is skewed to basic residues; it reads SPVRSKSRSQSKSHSHSRSMSHSRSRSRS. Residues 354 to 369 show a composition bias toward basic and acidic residues; it reads RSRDKVESQVESAPKE. Ser-355 is modified (phosphoserine). Residues 571-582 are compositionally biased toward basic residues; the sequence is NQHKSLPKKKKP. Thr-593 is subject to Phosphothreonine. Residues Ser-595, Ser-602, and Ser-631 each carry the phosphoserine modification. Thr-632 bears the Phosphothreonine mark. Residues Ser-635, Ser-636, and Ser-642 each carry the phosphoserine modification. The segment covering 644 to 665 has biased composition (basic and acidic residues); it reads FEARRSKKVDKAKASKALRDSD. Residues 710–725 show a composition bias toward gly residues; that stretch reads SGSGSGSGSGSGSDND.

This is Another transcription unit protein (Atu) from Drosophila melanogaster (Fruit fly).